The chain runs to 444 residues: Deoxyguanosinetriphosphate triphosphohydrolase-like protein (444 aa).

The disordered stretch occupies residues 1–26 (MTESLWHERRLTEEKKRRNDHRSPYQ). The HD domain occupies 59–250 (RLTHSLEVSQ…MELADDIAYA (192 aa)).

Belongs to the dGTPase family. Type 2 subfamily.

The sequence is that of Deoxyguanosinetriphosphate triphosphohydrolase-like protein from Shewanella sediminis (strain HAW-EB3).